The chain runs to 404 residues: Inner membrane transport protein YdiM (404 aa).

Residues 1–5 are Periplasmic-facing; it reads MKNPY. The chain crosses the membrane as a helical span at residues 6–26; sequence FPTALGLYFNYLVHGMGVLLM. At 27–43 the chain is on the cytoplasmic side; it reads SLNMASLETLWQTNAAG. A helical membrane pass occupies residues 44–64; the sequence is VSIVISSLGIGRLSVLLFAGL. Over 65–84 the chain is Periplasmic; sequence LSDRFGRRPFIMLGMCCYMA. Residues 85 to 105 form a helical membrane-spanning segment; sequence FFFGILQTNNIIIAYVFGFLA. Over 106–132 the chain is Cytoplasmic; sequence GMANSFLDAGTYPSLMEAFPRSPGTAN. The helical transmembrane segment at 133 to 153 threads the bilayer; it reads ILIKAFVSSGQFLLPLIISLL. Over 154–157 the chain is Periplasmic; it reads VWAE. The chain crosses the membrane as a helical span at residues 158-178; that stretch reads LWFGWSFMIAAGIMFINALFL. Residues 179–206 lie on the Cytoplasmic side of the membrane; the sequence is YRCTFPPHPGRRLPVIKKTTSSTEHRCS. A helical transmembrane segment spans residues 207-227; the sequence is IIDLASYTLYGYISMATFYLV. Residues 228–246 are Periplasmic-facing; it reads SQWLAQYGQFVAGMSYTMS. The chain crosses the membrane as a helical span at residues 247–267; it reads IKLLSIYTVGSLLCVFITAPL. Over 268–273 the chain is Cytoplasmic; the sequence is IRNTVR. A helical membrane pass occupies residues 274 to 294; sequence PTTLLMLYTFISFIALFTVCL. The Periplasmic segment spans residues 295–296; it reads HP. The helical transmembrane segment at 297–317 threads the bilayer; sequence TFYVVIIFAFVIGFTSAGGVV. Over 318–336 the chain is Cytoplasmic; it reads QIGLTLMAERFPYAKGKAT. A helical transmembrane segment spans residues 337–357; sequence GIYYSAGSIATFTIPLITAHL. At 358–364 the chain is on the periplasmic side; the sequence is SQRSIAD. The chain crosses the membrane as a helical span at residues 365-385; it reads IMWFDTAIAAIGFLLALFIGL. Over 386–404 the chain is Cytoplasmic; that stretch reads RSRKKTRHHSLKENVAPGG.

This sequence belongs to the major facilitator superfamily.

Its subcellular location is the cell inner membrane. The sequence is that of Inner membrane transport protein YdiM (ydiM) from Escherichia coli (strain K12).